Consider the following 282-residue polypeptide: Glutamyl endopeptidase (282 aa).

A signal peptide spans 1–27 (MKKRFLSICTMTIAALATTTMVNTSYA). A propeptide spanning residues 28 to 66 (KTDTESHNHSSLGTENKNVLDINSSSHNIKPSQNKSYPS) is cleaved from the precursor. Residues His-117, Asp-159, and Ser-235 each act as charge relay system in the active site.

Belongs to the peptidase S1B family.

It localises to the secreted. The catalysed reaction is Preferential cleavage: Glu-|-Xaa, Asp-|-Xaa.. In terms of biological role, exhibits a significant hydrolytic activity for the carbonyl side of glutamic acid. Shows activity toward human fibronectin and type 1 collagen. The protein is Glutamyl endopeptidase (gseA) of Staphylococcus epidermidis (strain ATCC 35984 / DSM 28319 / BCRC 17069 / CCUG 31568 / BM 3577 / RP62A).